The following is a 770-amino-acid chain: ARF GTPase-activating protein GIT1 (770 aa).

The Arf-GAP domain maps to 1-124 (MSRKGPRAEV…AFVHKLPCRD (124 aa)). The segment at 1–124 (MSRKGPRAEV…AFVHKLPCRD (124 aa)) is interaction with gamma-tubulin and localization to the centrosome. The C4-type zinc finger occupies 11–34 (CADCSAPDPGWASISRGVLVCDEC). ANK repeat units lie at residues 132–161 (DLSK…QANF), 166–195 (KGTT…DPGS), and 199–228 (NGRT…ELTD). Tyr224 bears the Phosphotyrosine mark. Residues 245-374 (HYIIPQMADR…QGKSLSSPTD (130 aa)) form an interaction with PCLO region. Residues 253 to 424 (DRSRQKCMSQ…NRARSMDSSD (172 aa)) form an interaction with PTK2/FAK1 region. The interaction with ARHGEF7 stretch occupies residues 254-376 (RSRQKCMSQS…KSLSSPTDNL (123 aa)). Residues 363 to 425 (RQQGKSLSSP…RARSMDSSDL (63 aa)) are disordered. Over residues 366-383 (GKSLSSPTDNLELSARNQ) the composition is skewed to polar residues. Residues Ser368 and Ser371 each carry the phosphoserine modification. The residue at position 373 (Thr373) is a Phosphothreonine. Positions 375 to 596 (NLELSARNQS…QEGSRHASKL (222 aa)) are interaction with NCK2 and GRIN3A. Residues 375-596 (NLELSARNQS…QEGSRHASKL (222 aa)) are required for localization at synapses. A phosphoserine mark is found at Ser379 and Ser384. Residue Tyr392 is modified to Phosphotyrosine. Phosphoserine occurs at positions 394 and 397. A compositionally biased stretch (acidic residues) spans 394–403 (SVASDEDTDQ). Phosphothreonine is present on Thr401. 3 positions are modified to phosphoserine: Ser419, Ser422, and Ser426. Residues 420–475 (MDSSDLSDGAVTLQEYLELKKALATSEAKVQQLMKVNSSLSDELRKLQREIHKLQA) are interaction with MAPK1. Positions 429–629 (AVTLQEYLEL…EGKRFLELSK (201 aa)) are interaction with IKBKG. Residues 449 to 483 (VQQLMKVNSSLSDELRKLQREIHKLQAENLQLRQP) are a coiled coil. Phosphoserine occurs at positions 507 and 545. Thr546 is modified (phosphothreonine). 2 positions are modified to phosphotyrosine: Tyr554 and Tyr563. Ser570, Ser580, Ser601, and Ser605 each carry phosphoserine. Positions 574–586 (VTFTPSSPLLSSS) are enriched in low complexity. Positions 574–615 (VTFTPSSPLLSSSQEGSRHASKLSRHGSGAESDYENTQSGEP) are disordered. The residue at position 610 (Thr610) is a Phosphothreonine. At Ser639 the chain carries Phosphoserine. The interaction with PXN and TGFB1I1 stretch occupies residues 646-770 (PGLPSTEDVI…VTITTREKKQ (125 aa)).

In terms of assembly, forms homodimers and possibly oligomers. May form heterooligomers with GIT2. Interacts with G protein-coupled receptor kinases, including GRK2, GRK3, GRK5 and GRK6. Interacts with PPFIA1, PPFIA2 and PPFIA4. Interacts with GRIP1 and forms a ternary complex with PPFIA1 and GRIP1. Directly interacts with ARHGEF7/beta-PIX, forming in vitro a heptameric complex made of a GIT1 dimer and an ARHGEF7 trimer. Directly interacts with PXN/paxillin; this interaction is enhanced in the presence of ARHGEF7. Directly interacts (via C-terminus) with TGFB1I1/Hic-5 (via LD motif 3). Directly interacts with PTK2/FAK1. May interact with PTK2B/PYK2; this interaction may be indirect. Interacts with AMPA receptors GRIA2/3. Directly interacts with protein Piccolo/PCLO. Forms a complex with Ephrin-B1/EFNB1 and NCK2/GRB4 (via SH2); this interaction is important for spine morphogenesis and synapse formation. Interaction with NCK2 is transient and depends upon GIT1 phosphorylation at Tyr-392. Interacts with GRIN3A/GluN3A (via C-terminus); this interaction competes with GIT1 interaction with ARHGEF7 and limits synaptic localization of GIT1. Interacts with IKBKG/NEMO in resting bone mesenchymal stem cells, as well as in TNF-stimulated cells; this interaction may increase IKBKG affinity for 'Lys-63'-linked polyubiquitin chains. Interacts with GABA(A) receptors, including GABRB3 and GABRG2. Interacts with SCRIB. Interacts (via N- and C-terminus) with ENTR1/SDCCAG3 (via N-terminus); this interaction is direct. May form a tripartite complex with ENTR1 and PTPN13. Interacts with YWHAZ. Interacts with PAK1 and PAK3. Directly interacts (via N-terminus) with gamma-tubulin. Interacts with MAPK1 and MAPK3; this interaction is required for MAPK1/3 recruitment to focal adhesions. In terms of processing, phosphorylated on tyrosine residues by PTK2/FAK1 and SRC in growing fibroblasts. Phosphorylation at Tyr-392 is induced by activation of Ephrin-B1/EFNB1 and catalyzed by SRC family kinases. It is required for the interaction with NCK2 and for GIT1 recruitment to synapses in hippocampal neurons. In terms of tissue distribution, widely expressed. Expressed at high levels in testis (at protein level). Expressed in the brain, including in CA1 hippocampal neurons, in the amygdala, and thalamic nuclei (at protein level).

The protein localises to the cytoplasm. The protein resides in the synapse. Its subcellular location is the presynapse. It localises to the postsynapse. It is found in the postsynaptic density. The protein localises to the cell junction. The protein resides in the focal adhesion. Its subcellular location is the cell projection. It localises to the lamellipodium. It is found in the cytoskeleton. The protein localises to the microtubule organizing center. The protein resides in the centrosome. Its subcellular location is the spindle pole. Functionally, GTPase-activating protein for ADP ribosylation factor family members, including ARF1. Multidomain scaffold protein that interacts with numerous proteins and therefore participates in many cellular functions, including receptor internalization, focal adhesion remodeling, and signaling by both G protein-coupled receptors and tyrosine kinase receptors. Through PAK1 activation, positively regulates microtubule nucleation during interphase. Plays a role in the regulation of cytokinesis; for this function, may act in a pathway also involving ENTR1 and PTPN13. May promote cell motility both by regulating focal complex dynamics and by the activation of RAC1. May act as scaffold for MAPK1/3 signal transduction, recruiting MAPK1/3 to focal adhesions after EGF stimulation via a Src-dependent pathway, hence stimulating cell migration. Plays a role in brain development and function. Involved in the regulation of spine density and synaptic plasticity that is required for processes involved in learning. Plays an important role in dendritic spine morphogenesis and synapse formation. In hippocampal neurons, recruits guanine nucleotide exchange factors (GEFs), such as ARHGEF7/beta-PIX, to the synaptic membrane. These in turn locally activate RAC1, which is an essential step for spine morphogenesis and synapse formation. May contribute to the organization of presynaptic active zones through oligomerization and formation of a Piccolo/PCLO-based protein network, which includes ARHGEF7/beta-PIX and FAK1. In neurons, through its interaction with liprin-alpha family members, may be required for AMPA receptor (GRIA2/3) proper targeting to the cell membrane. In complex with GABA(A) receptors and ARHGEF7, plays a crucial role in regulating GABA(A) receptor synaptic stability, maintaining GPHN/gephyrin scaffolds and hence GABAergic inhibitory synaptic transmission, by locally coordinating RAC1 and PAK1 downstream effector activity, leading to F-actin stabilization. May also be important for RAC1 downstream signaling pathway through PAK3 and regulation of neuronal inhibitory transmission at presynaptic input. Required for successful bone regeneration during fracture healing. The function in intramembranous ossification may, at least partly, exerted by macrophages in which GIT1 is a key negative regulator of redox homeostasis, IL1B production, and glycolysis, acting through the ERK1/2/NRF2/NFE2L2 axis. May also play a role in angiogenesis during fracture healing. In this process, may regulate activation of the canonical NF-kappa-B signal in bone mesenchymal stem cells by enhancing the interaction between NEMO and 'Lys-63'-ubiquitinated RIPK1/RIP1, eventually leading to enhanced production of VEGFA and others angiogenic factors. Essential for VEGF signaling through the activation of phospholipase C-gamma and ERK1/2, hence may control endothelial cell proliferation and angiogenesis. The protein is ARF GTPase-activating protein GIT1 of Rattus norvegicus (Rat).